The sequence spans 916 residues: Protein prickle (916 aa).

Disordered stretches follow at residues 49 to 105 and 127 to 176; these read PLSP…AGGS and QHLQ…IPVD. Low complexity predominate over residues 145–156; sequence SSPSPALSSSIT. The segment covering 157-171 has biased composition (gly residues); sequence TGGGGVTRGGGGGGH. The PET domain maps to 167–275; the sequence is GGGGHIIPVD…TVKQLATNQI (109 aa). LIM zinc-binding domains lie at 274–338, 339–399, and 400–462; these read QICD…ETLK, PRCS…MFAE, and YCDF…GEPP. Disordered regions lie at residues 460 to 593, 635 to 671, 692 to 725, and 763 to 870; these read EPPT…PNHR, VIPG…QPQS, DAIQ…ENLP, and RSKS…DTVY. 3 stretches are compositionally biased toward polar residues: residues 507–517, 526–569, and 642–654; these read SPISERSTPHS, EMST…SRTL, and AKTN…SMPE. Low complexity predominate over residues 655-671; sequence LSQSLQQQQQQQQQPQS. The span at 777-793 shows a compositional bias: basic residues; the sequence is RSSKSKRRSSHHHQHHR. Over residues 796–805 the composition is skewed to low complexity; it reads GESSSYSGTS. The segment covering 829-844 has biased composition (basic and acidic residues); the sequence is VPDVEFIEHQDHHRGD. The span at 852-867 shows a compositional bias: low complexity; it reads RSVCSTCSSSSSSADD.

Belongs to the prickle / espinas / testin family. As to quaternary structure, interacts with dsh; PET and LIM domains interact with dsh DEP domain, in wing cells. Interacts with Vang in photoreceptor cells.

The protein localises to the cell membrane. Acts in a planar cell polarity (PCP) complex; polarization along the apical/basal axis of epithelial cells. PCP signaling in the wing disk requires the receptor fz and the cytoplasmic proteins dsh and pk. These act in a feedback loop leading to activation of the jnk cascade and subsequent polarized arrangement of hairs and bristles. Dgo and pk compete with one another for dsh binding, thereby modulating fz dsh activity and ensuring tight control over fz PCP signaling. Vang, stan and pk function together to regulate the establishment of tissue polarity in the adult eye. The chain is Protein prickle from Aedes aegypti (Yellowfever mosquito).